A 476-amino-acid chain; its full sequence is Ubiquinone biosynthesis monooxygenase COQ6, mitochondrial (476 aa).

The N-terminal 42 residues, 1–42 (MAARIGPMAGLLCVRWWSTAQLAARGGPLVACRRWTSSSTDS), are a transit peptide targeting the mitochondrion.

The protein belongs to the UbiH/COQ6 family. Component of a multi-subunit COQ enzyme complex, composed of at least COQ3, COQ4, COQ5, COQ6, COQ7 and COQ9. Interacts with COQ8B and COQ7. FAD serves as cofactor. In the kidney, expressed almost exclusively in glomerular podocytes. In the inner ear, expressed in the spiral ganglion, as well as in stria vascularis and spiral ligament cells.

It localises to the mitochondrion inner membrane. It is found in the golgi apparatus. The protein localises to the cell projection. It catalyses the reaction 4-hydroxy-3-(all-trans-decaprenyl)benzoate + 2 reduced [2Fe-2S]-[ferredoxin] + O2 + 2 H(+) = 3,4-dihydroxy-5-(all-trans-decaprenyl)benzoate + 2 oxidized [2Fe-2S]-[ferredoxin] + H2O. It carries out the reaction 2-methoxy-6-(all-trans-decaprenyl)phenol + 2 reduced [2Fe-2S]-[ferredoxin] + O2 + 2 H(+) = 2-methoxy-6-(all-trans-decaprenyl)benzene-1,4-diol + 2 oxidized [2Fe-2S]-[ferredoxin] + H2O. Its pathway is cofactor biosynthesis; ubiquinone biosynthesis. FAD-dependent monooxygenase required for two non-consecutive steps during ubiquinone biosynthesis. Required for the C5-ring hydroxylation during ubiquinone biosynthesis by catalyzing the hydroxylation of 4-hydroxy-3-(all-trans-decaprenyl)benzoic acid to 3,4-dihydroxy-5-(all-trans-decaprenyl)benzoic acid. Also acts downstream of COQ4, for the C1-hydroxylation during ubiquinone biosynthesis by catalyzing the hydroxylation of 2-methoxy-6-(all-trans-decaprenyl)phenol to 2-methoxy-6-(all-trans-decaprenyl)benzene-1,4-diol. The electrons required for the hydroxylation reaction are funneled indirectly to COQ6 from NADPH via a ferredoxin/ferredoxin reductase system composed of FDX2 and FDXR. This Rattus norvegicus (Rat) protein is Ubiquinone biosynthesis monooxygenase COQ6, mitochondrial.